The sequence spans 72 residues: Translation initiation factor IF-1 (72 aa).

Residues 1–72 (MAKEDCIEMQ…SKARIIFRAR (72 aa)) enclose the S1-like domain.

This sequence belongs to the IF-1 family. Component of the 30S ribosomal translation pre-initiation complex which assembles on the 30S ribosome in the order IF-2 and IF-3, IF-1 and N-formylmethionyl-tRNA(fMet); mRNA recruitment can occur at any time during PIC assembly.

The protein resides in the cytoplasm. Functionally, one of the essential components for the initiation of protein synthesis. Stabilizes the binding of IF-2 and IF-3 on the 30S subunit to which N-formylmethionyl-tRNA(fMet) subsequently binds. Helps modulate mRNA selection, yielding the 30S pre-initiation complex (PIC). Upon addition of the 50S ribosomal subunit IF-1, IF-2 and IF-3 are released leaving the mature 70S translation initiation complex. The polypeptide is Translation initiation factor IF-1 (Haemophilus ducreyi (strain 35000HP / ATCC 700724)).